The sequence spans 170 residues: Myelin-associated oligodendrocyte basic protein (170 aa).

Residues 69–170 (SRRATSPQRP…GSPTRAPRFW (102 aa)) form a disordered region. The span at 82-92 (PAASPVVVRAP) shows a compositional bias: low complexity. A phosphoserine mark is found at Ser85, Ser98, and Ser107. 2 repeat units span residues 93–101 (PAKPKSPLM) and 105–110 (PRSPPR). Residues 93–115 (PAKPKSPLMPAKPRSPPRPAKPR) form a 3 X 9 AA approximate tandem repeats region. A 3; half-length repeat occupies 111–115 (PAKPR). Positions 118–130 (SRTERQPRPRPEV) are enriched in basic and acidic residues. Over residues 138 to 151 (KPPQKSKQPARSSP) the composition is skewed to low complexity.

Its subcellular location is the cytoplasm. The protein resides in the perinuclear region. Its function is as follows. May play a role in compacting or stabilizing the myelin sheath possibly by binding the negatively charged acidic phospholipids of the cytoplasmic membrane. In Mus musculus (Mouse), this protein is Myelin-associated oligodendrocyte basic protein (Mobp).